A 22-amino-acid polypeptide reads, in one-letter code: Brain peptide MVPVPVHHMADELLRNGPDTVI (22 aa).

This Apis mellifera (Honeybee) protein is Brain peptide MVPVPVHHMADELLRNGPDTVI.